The following is a 138-amino-acid chain: Acidic phospholipase A2 inhibitor chain HPD-1I (138 aa).

The signal sequence occupies residues 1–16 (MRTLWIVAVCLIGVEG). 7 disulfide bridges follow: Cys-42–Cys-131, Cys-44–Cys-60, Cys-59–Cys-111, Cys-65–Cys-138, Cys-66–Cys-104, Cys-73–Cys-97, and Cys-91–Cys-102.

In terms of assembly, heterodimer of an acidic and a basic chain; non-covalently linked. The basic chain is toxic and has phospholipase A2 activity (chain HDP-1P (AC Q1RP79) or HDP-2P (AC Q1RP78)) and the acidic chain is non-toxic and functions as its inhibitor (chain HPD-1I). Expressed by the venom gland.

The protein localises to the secreted. In terms of biological role, heterodimer: slightly affects neuromuscular transmission acting presynaptically. It has a low catalytic activity, a low anticoagulant activity and weakly inhibits ADP-induced platelet aggregation. Monomer: has no activity (neurotoxic, catalytic, anticoagulant and a ADP-induced platelet aggregation), but inhibits phospholipase A2. This Vipera nikolskii (Nikolsky's adder) protein is Acidic phospholipase A2 inhibitor chain HPD-1I.